The following is an 82-amino-acid chain: MKVAIVFLSLLVLAFASESIEENREEFPVEESARCGDINAACKEDCDCCGYTTACDCYWSKSCKCREAAIVIYTAPKKKLTC.

Positions 1 to 16 (MKVAIVFLSLLVLAFA) are cleaved as a signal peptide. The propeptide occupies 17–34 (SESIEENREEFPVEESAR). Disulfide bonds link Cys-35–Cys-49, Cys-42–Cys-55, Cys-46–Cys-82, Cys-48–Cys-65, and Cys-57–Cys-63.

The protein belongs to the neurotoxin 03 (Tx2) family. 05 subfamily. Expressed by the venom gland.

The protein resides in the secreted. This neurotoxin binds at site 3 of insect voltage-activated sodium channels (Nav) and prolongs evoked axonal action potentials by a slowing down of sodium current inactivation. The toxin also inhibits glutamate uptake from rat brain synaptosomes. It reversibly inhibits the N-methyl-D-aspartate (NMDA)-subtype of ionotropic glutamate receptor (GRIN). In addition, the toxin shows antinociceptive effect in all rat pain models tested (inflammatory, neuropathic and nociceptive). The antinociceptive effect is partially blocked when selective antagonists of both mu- and delta-opioid receptors are administered, revealing that the antinociceptive effect of the toxin involves both opioid and cannabinoid endogenous systems. In vivo, it is highly toxic to house fly (Musca domestica), toxic to cockroach, but has no effect when intracerebroventricularly injected into mice. This Phoneutria nigriventer (Brazilian armed spider) protein is Delta-ctenitoxin-Pn1a.